Here is a 227-residue protein sequence, read N- to C-terminus: MSERRQDYKRHGSRYKARMRAVDILFEAESRDVDPVAIIDDRHKLARDTNPIVAPVAEYTETIINGVAVELDTLDVFLAEHIAETWTLGRLPSVDRAILRVASWEMIYNADVPVTTAIVEAVEIASEYSGDKSSAYINATLDAMASKVETLRERAANPEAVLAEASESLDDAPVAPWDDSDALDDSDEDFEAVDAAEVFEAEETVEVSEVAEDSEVSKVSEEKADES.

Disordered regions lie at residues 165–189 and 201–227; these read ASES…SDED and AEET…ADES. Composition is skewed to acidic residues over residues 178 to 189 and 201 to 214; these read DDSDALDDSDED and AEET…AEDS. Residues 215 to 227 are compositionally biased toward basic and acidic residues; sequence EVSKVSEEKADES.

This sequence belongs to the NusB family.

Its function is as follows. Involved in transcription antitermination. Required for transcription of ribosomal RNA (rRNA) genes. Binds specifically to the boxA antiterminator sequence of the ribosomal RNA (rrn) operons. This is Transcription antitermination protein NusB from Corynebacterium glutamicum (strain ATCC 13032 / DSM 20300 / JCM 1318 / BCRC 11384 / CCUG 27702 / LMG 3730 / NBRC 12168 / NCIMB 10025 / NRRL B-2784 / 534).